The sequence spans 285 residues: Biotin synthase (285 aa).

The region spanning 2-223 (STRKQIFLCA…RRAHTLLGED (222 aa)) is the Radical SAM core domain. C20, C24, and C27 together coordinate [4Fe-4S] cluster. Residues C64, C99, and C157 each contribute to the [2Fe-2S] cluster site.

This sequence belongs to the radical SAM superfamily. Biotin synthase family. Homodimer. It depends on [4Fe-4S] cluster as a cofactor. [2Fe-2S] cluster serves as cofactor.

The enzyme catalyses (4R,5S)-dethiobiotin + (sulfur carrier)-SH + 2 reduced [2Fe-2S]-[ferredoxin] + 2 S-adenosyl-L-methionine = (sulfur carrier)-H + biotin + 2 5'-deoxyadenosine + 2 L-methionine + 2 oxidized [2Fe-2S]-[ferredoxin]. It functions in the pathway cofactor biosynthesis; biotin biosynthesis; biotin from 7,8-diaminononanoate: step 2/2. Functionally, catalyzes the conversion of dethiobiotin (DTB) to biotin by the insertion of a sulfur atom into dethiobiotin via a radical-based mechanism. The protein is Biotin synthase of Sulfurovum sp. (strain NBC37-1).